Here is a 471-residue protein sequence, read N- to C-terminus: Ribulose bisphosphate carboxylase large chain (471 aa).

N6,N6,N6-trimethyllysine is present on lysine 5. Positions 114 and 164 each coordinate substrate. Lysine 166 acts as the Proton acceptor in catalysis. Lysine 168 lines the substrate pocket. Positions 192, 194, and 195 each coordinate Mg(2+). Lysine 192 bears the N6-carboxylysine mark. The Proton acceptor role is filled by histidine 285. 3 residues coordinate substrate: arginine 286, histidine 318, and serine 370.

This sequence belongs to the RuBisCO large chain family. Type I subfamily. In terms of assembly, heterohexadecamer of 8 large chains and 8 small chains; disulfide-linked. The disulfide link is formed within the large subunit homodimers. Requires Mg(2+) as cofactor. In terms of processing, the disulfide bond which can form in the large chain dimeric partners within the hexadecamer appears to be associated with oxidative stress and protein turnover.

Its subcellular location is the plastid. It is found in the chloroplast. The catalysed reaction is 2 (2R)-3-phosphoglycerate + 2 H(+) = D-ribulose 1,5-bisphosphate + CO2 + H2O. The enzyme catalyses D-ribulose 1,5-bisphosphate + O2 = 2-phosphoglycolate + (2R)-3-phosphoglycerate + 2 H(+). Functionally, ruBisCO catalyzes two reactions: the carboxylation of D-ribulose 1,5-bisphosphate, the primary event in carbon dioxide fixation, as well as the oxidative fragmentation of the pentose substrate in the photorespiration process. Both reactions occur simultaneously and in competition at the same active site. The polypeptide is Ribulose bisphosphate carboxylase large chain (Deppea grandiflora).